Reading from the N-terminus, the 137-residue chain is Large ribosomal subunit protein uL16 (137 aa).

Positions 1–20 (MLQPSNRKYRKDFKGRNRGV) are disordered. Positions 7–17 (RKYRKDFKGRN) are enriched in basic residues.

This sequence belongs to the universal ribosomal protein uL16 family. As to quaternary structure, part of the 50S ribosomal subunit.

In terms of biological role, binds 23S rRNA and is also seen to make contacts with the A and possibly P site tRNAs. The sequence is that of Large ribosomal subunit protein uL16 from Coxiella burnetii (strain CbuK_Q154) (Coxiella burnetii (strain Q154)).